A 95-amino-acid chain; its full sequence is Protein TusB (95 aa).

It belongs to the DsrH/TusB family. Heterohexamer, formed by a dimer of trimers. The hexameric TusBCD complex contains 2 copies each of TusB, TusC and TusD. The TusBCD complex interacts with TusE.

The protein localises to the cytoplasm. In terms of biological role, part of a sulfur-relay system required for 2-thiolation of 5-methylaminomethyl-2-thiouridine (mnm(5)s(2)U) at tRNA wobble positions. The polypeptide is Protein TusB (Salmonella agona (strain SL483)).